The following is a 938-amino-acid chain: Protein translocase subunit SecA (938 aa).

Residues Q90, 108–112, and D504 contribute to the ATP site; that span reads GEGKT.

Belongs to the SecA family. As to quaternary structure, monomer and homodimer. Part of the essential Sec protein translocation apparatus which comprises SecA, SecYEG and auxiliary proteins SecDF. Other proteins may also be involved.

It localises to the cell inner membrane. Its subcellular location is the cellular thylakoid membrane. The protein resides in the cytoplasm. It carries out the reaction ATP + H2O + cellular proteinSide 1 = ADP + phosphate + cellular proteinSide 2.. Functionally, part of the Sec protein translocase complex. Interacts with the SecYEG preprotein conducting channel. Has a central role in coupling the hydrolysis of ATP to the transfer of proteins into and across the cell membrane, serving as an ATP-driven molecular motor driving the stepwise translocation of polypeptide chains across the membrane. Probably participates in protein translocation into and across both the cytoplasmic and thylakoid membranes in cyanobacterial cells. The chain is Protein translocase subunit SecA from Picosynechococcus sp. (strain ATCC 27264 / PCC 7002 / PR-6) (Agmenellum quadruplicatum).